The primary structure comprises 386 residues: Phosphoglycerate kinase (386 aa).

Substrate contacts are provided by residues 21–23 (DLN), arginine 36, 59–62 (HLGR), arginine 112, and arginine 145. Residues lysine 196, glutamate 313, and 339 to 342 (GGDT) contribute to the ATP site.

The protein belongs to the phosphoglycerate kinase family. In terms of assembly, monomer.

It localises to the cytoplasm. It catalyses the reaction (2R)-3-phosphoglycerate + ATP = (2R)-3-phospho-glyceroyl phosphate + ADP. It functions in the pathway carbohydrate degradation; glycolysis; pyruvate from D-glyceraldehyde 3-phosphate: step 2/5. The sequence is that of Phosphoglycerate kinase from Haemophilus influenzae (strain PittEE).